Consider the following 99-residue polypeptide: Putative RNA-binding protein RbpE (99 aa).

In terms of domain architecture, RRM spans 2–79; that stretch reads SIYVGNLSYS…RVLKVNKARP (78 aa). The interval 78–99 is disordered; it reads RPREEKGARSGGGSWSRNNGGY. The segment covering 86 to 99 has biased composition (gly residues); it reads RSGGGSWSRNNGGY.

In Nostoc sp. (strain PCC 7120 / SAG 25.82 / UTEX 2576), this protein is Putative RNA-binding protein RbpE (rbpE).